The chain runs to 177 residues: Large ribosomal subunit protein uL6 (177 aa).

Belongs to the universal ribosomal protein uL6 family. In terms of assembly, part of the 50S ribosomal subunit.

This protein binds to the 23S rRNA, and is important in its secondary structure. It is located near the subunit interface in the base of the L7/L12 stalk, and near the tRNA binding site of the peptidyltransferase center. This chain is Large ribosomal subunit protein uL6, found in Chromobacterium violaceum (strain ATCC 12472 / DSM 30191 / JCM 1249 / CCUG 213 / NBRC 12614 / NCIMB 9131 / NCTC 9757 / MK).